The chain runs to 231 residues: Two-component response regulator ORR1 (231 aa).

One can recognise a Response regulatory domain in the interval 9-135 (RVLLVDDSPV…DVQRLRNCSP (127 aa)). D68 carries the post-translational modification 4-aspartylphosphate.

Belongs to the ARR family. Type-A subfamily. Post-translationally, two-component system major event consists of a His-to-Asp phosphorelay between a sensor histidine kinase (HK) and a response regulator (RR). In plants, the His-to-Asp phosphorelay involves an additional intermediate named Histidine-containing phosphotransfer protein (HPt). This multistep phosphorelay consists of a His-Asp-His-Asp sequential transfer of a phosphate group between first a His and an Asp of the HK protein, followed by the transfer to a conserved His of the HPt protein and finally the transfer to an Asp in the receiver domain of the RR protein. As to expression, expressed in roots, leaf blades, leaf sheaths, shoot apex, flowers and panicles.

Its function is as follows. Functions as a response regulator involved in His-to-Asp phosphorelay signal transduction system. Phosphorylation of the Asp residue in the receiver domain activates the ability of the protein to promote the transcription of target genes. Type-A response regulators seem to act as negative regulators of the cytokinin signaling. Involved in adventitious (crown) root initiation under the regulation of CRL5. This is Two-component response regulator ORR1 from Oryza sativa subsp. japonica (Rice).